The following is a 292-amino-acid chain: MTEKKRFPLSLSSIAEKAPRSGARTEVNRSSTSGKVATPQTATQNASQHGKRTITPARPAEVPRKAAAAPSSNERATPLVSEAVRKAMTARVAKQGVKDSKVLAAMDAVPRHLFMEPALASQAYIDASLPIGYHQTISQPYIVARMIEVMRNNQQGGVLNRVLEIGTGCGYQAAVLSLVAKEVYSIERIKGLHELAKANLRPMRVANIRLHYGDGMLGLPQAAPFDGIILAAAGLEVPQALLEQMTIGGRLVAPVGERHQVLQLIERVSKFEWKSSTLEDCHFVPLRPGTVT.

A disordered region spans residues 1-76; sequence MTEKKRFPLS…AAAPSSNERA (76 aa). Over residues 28–48 the composition is skewed to polar residues; it reads NRSSTSGKVATPQTATQNASQ. Ser138 is a catalytic residue.

It belongs to the methyltransferase superfamily. L-isoaspartyl/D-aspartyl protein methyltransferase family.

The protein localises to the cytoplasm. It carries out the reaction [protein]-L-isoaspartate + S-adenosyl-L-methionine = [protein]-L-isoaspartate alpha-methyl ester + S-adenosyl-L-homocysteine. In terms of biological role, catalyzes the methyl esterification of L-isoaspartyl residues in peptides and proteins that result from spontaneous decomposition of normal L-aspartyl and L-asparaginyl residues. It plays a role in the repair and/or degradation of damaged proteins. The sequence is that of Protein-L-isoaspartate O-methyltransferase from Janthinobacterium sp. (strain Marseille) (Minibacterium massiliensis).